Consider the following 77-residue polypeptide: MKNYSKNATHLITVLLFSFVVILLIIPSKCEAVSNDMQPLEARSADLVPEPRYIIDVPPRCPPGSKFIKNRCRVIVP.

Residues 1–32 (MKNYSKNATHLITVLLFSFVVILLIIPSKCEA) form the signal peptide. Positions 33–52 (VSNDMQPLEARSADLVPEPR) are excised as a propeptide. An intrachain disulfide couples C61 to C72.

The protein belongs to the secapin family. In terms of tissue distribution, expressed by the venom gland.

The protein resides in the secreted. Its function is as follows. Serine protease inhibitor which exhibits antifibrinolytic, antielastolytic and antimicrobial activities. Displays antimicrobial activity against bacteria and fungi. Likely functions in the innate immune response to microbial infection and possibly in the venom, as an antifibrinolytic agent. Not toxic to mice but does induce slight sedation at higher doses (from 40 mg/kg). At a dose of 80 mg/kg, sedation occurs 15 minutes after injection and is accompanied by piloerection and hypothermia. This is Secapin from Apis mellifera (Honeybee).